The following is a 560-amino-acid chain: Arginine--tRNA ligase (560 aa).

Residues 121 to 131 carry the 'HIGH' region motif; the sequence is PNIAKPFSMGH.

The protein belongs to the class-I aminoacyl-tRNA synthetase family. In terms of assembly, monomer.

The protein resides in the cytoplasm. The catalysed reaction is tRNA(Arg) + L-arginine + ATP = L-arginyl-tRNA(Arg) + AMP + diphosphate. The polypeptide is Arginine--tRNA ligase (Exiguobacterium sibiricum (strain DSM 17290 / CCUG 55495 / CIP 109462 / JCM 13490 / 255-15)).